A 51-amino-acid polypeptide reads, in one-letter code: VDCSEYPQPACTTERRPVCGSNNKTYSNKCNFCNAVVKSNGTLTVSHFGKC.

Positions 1-49 (VDCSEYPQPACTTERRPVCGSNNKTYSNKCNFCNAVVKSNGTLTVSHFG) constitute a Kazal-like domain. Disulfide bonds link Cys-3–Cys-33, Cys-11–Cys-30, and Cys-19–Cys-51. Asn-40 carries N-linked (GlcNAc...) asparagine glycosylation.

It localises to the secreted. The chain is Ovomucoid from Polyplectron napoleonis (Palawan peacock-pheasant).